A 288-amino-acid chain; its full sequence is Damage-control phosphatase AF_1104 (288 aa).

The Subfamily I CxxC motif signature appears at 7-10 (CPSC). Mn(2+)-binding residues include Asp-160, Asn-161, and Asp-194. The Subfamily I GNFE-like motif motif lies at 247 to 250 (ANYE). The short motif at 267-268 (KC) is the Subfamily I KC motif element.

It belongs to the damage-control phosphatase family. Nucleotides phosphatase I subfamily. The cofactor is [2Fe-2S] cluster. Requires Mn(2+) as cofactor. It depends on Ni(2+) as a cofactor.

Metal-dependent phosphatase with probable damage-control functions. Could hydrolyze oxidatively damaged purine nucleotides or their biosynthetic intermediates. The sequence is that of Damage-control phosphatase AF_1104 from Archaeoglobus fulgidus (strain ATCC 49558 / DSM 4304 / JCM 9628 / NBRC 100126 / VC-16).